We begin with the raw amino-acid sequence, 363 residues long: D-alanine--D-alanine ligase (363 aa).

Positions 146–352 constitute an ATP-grasp domain; sequence KLCAADAGVA…FTALIDKLLH (207 aa). An ATP-binding site is contributed by 179-234; the sequence is DSTFGYPLFVKPASLGSSVGISKVHLPAALPEALKVACSYDRKILVEAAVSGKEIE. 3 residues coordinate Mg(2+): Asp305, Glu319, and Asn321.

Belongs to the D-alanine--D-alanine ligase family. The cofactor is Mg(2+). Requires Mn(2+) as cofactor.

It is found in the cytoplasm. The catalysed reaction is 2 D-alanine + ATP = D-alanyl-D-alanine + ADP + phosphate + H(+). Its pathway is cell wall biogenesis; peptidoglycan biosynthesis. Functionally, cell wall formation. In Chlorobium limicola (strain DSM 245 / NBRC 103803 / 6330), this protein is D-alanine--D-alanine ligase.